The following is a 285-amino-acid chain: Eukaryotic translation initiation factor 3 subunit F-2 (285 aa).

The MPN domain maps to 11–145 (VFIKPLVLFQ…TRLYCAVEIG (135 aa)).

It belongs to the eIF-3 subunit F family. As to quaternary structure, component of the eukaryotic translation initiation factor 3 (eIF-3) complex. The eIF-3 complex interacts with pix.

Its subcellular location is the cytoplasm. Component of the eukaryotic translation initiation factor 3 (eIF-3) complex, which is involved in protein synthesis of a specialized repertoire of mRNAs and, together with other initiation factors, stimulates binding of mRNA and methionyl-tRNAi to the 40S ribosome. The eIF-3 complex specifically targets and initiates translation of a subset of mRNAs involved in cell proliferation. This Drosophila yakuba (Fruit fly) protein is Eukaryotic translation initiation factor 3 subunit F-2.